The sequence spans 184 residues: Ribosome-recycling factor (184 aa).

This sequence belongs to the RRF family.

Its subcellular location is the cytoplasm. Its function is as follows. Responsible for the release of ribosomes from messenger RNA at the termination of protein biosynthesis. May increase the efficiency of translation by recycling ribosomes from one round of translation to another. The sequence is that of Ribosome-recycling factor from Clostridium botulinum (strain Loch Maree / Type A3).